We begin with the raw amino-acid sequence, 100 residues long: Large ribosomal subunit protein uL23 (100 aa).

Belongs to the universal ribosomal protein uL23 family. As to quaternary structure, part of the 50S ribosomal subunit. Contacts protein L29, and trigger factor when it is bound to the ribosome.

One of the early assembly proteins it binds 23S rRNA. One of the proteins that surrounds the polypeptide exit tunnel on the outside of the ribosome. Forms the main docking site for trigger factor binding to the ribosome. The polypeptide is Large ribosomal subunit protein uL23 (Pseudothermotoga lettingae (strain ATCC BAA-301 / DSM 14385 / NBRC 107922 / TMO) (Thermotoga lettingae)).